The chain runs to 564 residues: Cytochrome c oxidase subunit 1 (564 aa).

The segment at 1 to 23 is disordered; sequence MTAVAPRLENYAEPTRPAPTGGA. 7 consecutive transmembrane segments (helical) span residues 43-63, 83-103, 122-142, 171-191, 214-234, 259-279, and 292-312; these read MMYIVMSFVWFFVGGLMALLI, LFTLHGTIMLLAFGTPVVWGF, LNAFGFWITQIGVVAMLAGFL, FWIIGVGATGVGTIASAVNMI, IFVASVIVLLIFPLLTAAALG, LFWFFGHPEVYVLALPFFGIV, and FGYIGLVFATLSIGMLSMAVW. Position 87 (H87) interacts with Fe(II)-heme a. Residues H265 and Y269 each coordinate Cu cation. Residues 265 to 269 constitute a cross-link (1'-histidyl-3'-tyrosine (His-Tyr)); it reads HPEVY. The Cu cation site is built by H314 and H315. A run of 2 helical transmembrane segments spans residues 316 to 336 and 360 to 380; these read MFVTGAILLPFFSFMTFLISV and MTWTMGFLVTFLFGGLTGIML. H398 contributes to the heme a3 binding site. 3 helical membrane-spanning segments follow: residues 399–419, 434–454, and 477–497; these read FHYTLFGTVVFASYAGVYFWF, IHFWITFVGFHGTFLVQHWVG, and ISTVFSFLLGVSVIPFIWNVF. H400 contributes to the Fe(II)-heme a binding site.

Belongs to the heme-copper respiratory oxidase family. In terms of assembly, associates with subunits II, III and IV to form cytochrome c oxidase. Cu(2+) is required as a cofactor. Requires heme as cofactor.

It localises to the cell membrane. The catalysed reaction is 4 Fe(II)-[cytochrome c] + O2 + 8 H(+)(in) = 4 Fe(III)-[cytochrome c] + 2 H2O + 4 H(+)(out). The protein operates within energy metabolism; oxidative phosphorylation. Its function is as follows. Cytochrome c oxidase is the component of the respiratory chain that catalyzes the reduction of oxygen to water. Subunits 1-3 form the functional core of the enzyme complex. CO I is the catalytic subunit of the enzyme. Electrons originating in cytochrome c are transferred via the copper A center of subunit 2 and heme A of subunit 1 to the bimetallic center formed by heme A3 and copper B. This chain is Cytochrome c oxidase subunit 1 (ctaD), found in Corynebacterium diphtheriae (strain ATCC 700971 / NCTC 13129 / Biotype gravis).